A 209-amino-acid chain; its full sequence is E3 ubiquitin-protein ligase RNF138 (209 aa).

The segment at 18–58 adopts an RING-type zinc-finger fold; that stretch reads CPVCQEVLKTPVRTAACQHVFCRKCFLTAMRESGIHCPLCR. Zn(2+) contacts are provided by Cys-86, Cys-89, His-101, and Cys-105. The segment at 86 to 105 adopts a C2HC RNF-type zinc-finger fold; sequence CRCCSKKIKFYRMRHHYKSC. The interval 125-154 is disordered; sequence QDSVRSSNRSETSASDNTETYQEDTSSSGH. Phosphothreonine is present on Thr-142. The segment at 157 to 180 adopts a C2H2-type zinc-finger fold; the sequence is FKCPLCQESNFTRQRLLDHCNSNH. The 19-residue stretch at 189–207 folds into the UIM domain; it reads LQLDEETQYQTAVEESFQV.

Interacts with NLK. Interacts with XRCC5/Ku80. Interacts with RBBP8/CtIP. Post-translationally, auto-ubiquitinated.

It localises to the chromosome. It catalyses the reaction S-ubiquitinyl-[E2 ubiquitin-conjugating enzyme]-L-cysteine + [acceptor protein]-L-lysine = [E2 ubiquitin-conjugating enzyme]-L-cysteine + N(6)-ubiquitinyl-[acceptor protein]-L-lysine.. It functions in the pathway protein modification; protein ubiquitination. Its function is as follows. E3 ubiquitin-protein ligase involved in DNA damage response by promoting DNA resection and homologous recombination. Recruited to sites of double-strand breaks following DNA damage and specifically promotes double-strand break repair via homologous recombination. Two different, non-exclusive, mechanisms have been proposed. According to a report, regulates the choice of double-strand break repair by favoring homologous recombination over non-homologous end joining (NHEJ): acts by mediating ubiquitination of XRCC5/Ku80, leading to remove the Ku complex from DNA breaks, thereby promoting homologous recombination. According to another report, cooperates with UBE2Ds E2 ubiquitin ligases (UBE2D1, UBE2D2, UBE2D3 or UBE2D4) to promote homologous recombination by mediating ubiquitination of RBBP8/CtIP. Together with NLK, involved in the ubiquitination and degradation of TCF/LEF. Also exhibits auto-ubiquitination activity in combination with UBE2K. May act as a negative regulator in the Wnt/beta-catenin-mediated signaling pathway. The protein is E3 ubiquitin-protein ligase RNF138 of Rattus norvegicus (Rat).